Here is a 523-residue protein sequence, read N- to C-terminus: uncharacterized protein (523 aa).

This is an uncharacterized protein from Saccharomyces cerevisiae (strain ATCC 204508 / S288c) (Baker's yeast).